The following is a 637-amino-acid chain: Neurexin-3-beta (637 aa).

A signal peptide spans 1 to 35 (MHLRIHARRSPPRRPAWTLGIWFLFWGCIVSSVWS). Residues 36–562 (SSNVASSSST…EVIRESSSTT (527 aa)) lie on the Extracellular side of the membrane. A compositionally biased stretch (low complexity) spans 43 to 52 (SSTSSSPGSH). The tract at residues 43-65 (SSTSSSPGSHSQHEHHFHGSKHH) is disordered. Basic residues predominate over residues 55 to 65 (HEHHFHGSKHH). In terms of domain architecture, Laminin G-like spans 85-255 (ATYIFGKSGG…NPNIKINGSV (171 aa)). Residues Asp-137 and Ile-154 each coordinate Ca(2+). N-linked (GlcNAc...) asparagine glycosylation is present at Asn-184. Residues Ile-206 and Asn-208 each contribute to the Ca(2+) site. 2 N-linked (GlcNAc...) asparagine glycosylation sites follow: Asn-252 and Asn-296. The disordered stretch occupies residues 289-310 (ATTTTRKNRSTASIQPTSDDLV). Polar residues predominate over residues 298–310 (STASIQPTSDDLV). Ser-312 carries O-linked (Xyl...) (heparan sulfate) serine glycosylation. Residues 563–583 (GMVVGIVAAAALCILILLYAM) form a helical membrane-spanning segment. The Cytoplasmic segment spans residues 584–637 (YKYRNRDEGSYQVDETRNYISNSAQSNGTLMKEKQQSSKSGHKKQKNKDREYYV). The tract at residues 605-637 (NSAQSNGTLMKEKQQSSKSGHKKQKNKDREYYV) is disordered.

Belongs to the neurexin family. Weakly interacts with CBLN1 and CBLN2. Very weak binding, if any, to CBLN4. Specific isoforms bind neuroligins NLGN1, NLGN2 and NLGN3. Interacts with CLSTN3. In terms of processing, processed by alpha-secretase leading to the formation of an extracellular soluble protein as well as a C-terminal membrane-embedded fragment (CTF). Proteolysis of these CTFs by gamma-secretase releases intracellular domains (ICDs) and extracellular peptides. Post-translationally, O-glycosylated; contains heparan sulfate. Heparan sulfate attachment is required for synapse development by mediating interactions with neuroligins. In terms of tissue distribution, expressed in the blood vessel walls (at protein level).

The protein localises to the presynaptic cell membrane. In terms of biological role, neuronal cell surface protein that may be involved in cell recognition and cell adhesion. May mediate intracellular signaling. Functions as part of a trans-synaptic complex by binding to cerebellins and postsynaptic GRID1. This interaction helps regulate the activity of NMDA and AMPA receptors at hippocampal synapses without affecting synapse formation. NRXN3B-CBLN2-GRID1 complex transduce presynaptic signals into postsynaptic AMPAR response. In Homo sapiens (Human), this protein is Neurexin-3-beta.